A 244-amino-acid polypeptide reads, in one-letter code: Flavin-dependent thymidylate synthase (244 aa).

Positions 7–199 (PRVFLIASWG…PNLARLVWED (193 aa)) constitute a ThyX domain. Residues Ser-60 and 83-85 (RHR) contribute to the FAD site. DUMP-binding positions include 80-83 (QFIR), 93-95 (SQR), and Arg-137. The ThyX motif signature appears at 83-93 (RHRMASYWSES). Residues 153–155 (NAR) and Asn-160 each bind FAD. Arg-165 contacts dUMP. Arg-165 acts as the Involved in ionization of N3 of dUMP, leading to its activation in catalysis.

The protein belongs to the thymidylate synthase ThyX family. In terms of assembly, homotetramer. It depends on FAD as a cofactor.

The enzyme catalyses dUMP + (6R)-5,10-methylene-5,6,7,8-tetrahydrofolate + NADPH + H(+) = dTMP + (6S)-5,6,7,8-tetrahydrofolate + NADP(+). It participates in pyrimidine metabolism; dTTP biosynthesis. In terms of biological role, catalyzes the reductive methylation of 2'-deoxyuridine-5'-monophosphate (dUMP) to 2'-deoxythymidine-5'-monophosphate (dTMP) while utilizing 5,10-methylenetetrahydrofolate (mTHF) as the methyl donor, and NADPH and FADH(2) as the reductant. In Pyrobaculum aerophilum (strain ATCC 51768 / DSM 7523 / JCM 9630 / CIP 104966 / NBRC 100827 / IM2), this protein is Flavin-dependent thymidylate synthase.